A 117-amino-acid chain; its full sequence is MSTKSSSIHGRNEVKMEGEKRKDVESESTHVTLNVKGQDEEGVKVFRVRRKARLLKLMEYYAKMRGIEWNTFRFLSDDGSRIREYHTADDMELKDGDQIDALLPQESGFGPSTVFRV.

The interval 1–30 (MSTKSSSIHGRNEVKMEGEKRKDVESESTH) is disordered. Residues 10 to 28 (GRNEVKMEGEKRKDVESES) show a composition bias toward basic and acidic residues. Positions 31 to 108 (VTLNVKGQDE…IDALLPQESG (78 aa)) constitute a Ubiquitin-like domain. Glycine 108 participates in a covalent cross-link: Glycyl lysine isopeptide (Gly-Lys) (interchain with K-? in acceptor proteins).

It belongs to the ubiquitin family. SUMO subfamily. In terms of assembly, interacts with SAE2, SCE1, SIZ1 and MMS21 Covalently attached to a number of proteins.

Its subcellular location is the nucleus. It localises to the cytoplasm. Its function is as follows. Ubiquitin-like protein which can be covalently attached to target lysines as a monomer. Does not seem to be involved in protein degradation and may function as an antagonist of ubiquitin in the degradation process. This chain is Putative small ubiquitin-related modifier 6 (SUMO6), found in Arabidopsis thaliana (Mouse-ear cress).